The sequence spans 320 residues: Elongation factor Ts (320 aa).

An involved in Mg(2+) ion dislocation from EF-Tu region spans residues 82–85 (TDFV).

Belongs to the EF-Ts family.

The protein localises to the cytoplasm. Its function is as follows. Associates with the EF-Tu.GDP complex and induces the exchange of GDP to GTP. It remains bound to the aminoacyl-tRNA.EF-Tu.GTP complex up to the GTP hydrolysis stage on the ribosome. This chain is Elongation factor Ts, found in Flavobacterium johnsoniae (strain ATCC 17061 / DSM 2064 / JCM 8514 / BCRC 14874 / CCUG 350202 / NBRC 14942 / NCIMB 11054 / UW101) (Cytophaga johnsonae).